Reading from the N-terminus, the 76-residue chain is Small nuclear ribonucleoprotein G (76 aa).

The 73-residue stretch at 4–76 (AHPPELKKFM…IIMLEALERV (73 aa)) folds into the Sm domain.

The protein belongs to the snRNP Sm proteins family. Core component of the spliceosomal U1, U2, U4 and U5 small nuclear ribonucleoproteins (snRNPs), the building blocks of the spliceosome. Most spliceosomal snRNPs contain a common set of Sm proteins, SNRPB, SNRPD1, SNRPD2, SNRPD3, SNRPE, SNRPF and SNRPG that assemble in a heptameric protein ring on the Sm site of the small nuclear RNA to form the core snRNP. Component of the U1 snRNP. The U1 snRNP is composed of the U1 snRNA and the 7 core Sm proteins SNRPB, SNRPD1, SNRPD2, SNRPD3, SNRPE, SNRPF and SNRPG, and at least three U1 snRNP-specific proteins SNRNP70/U1-70K, SNRPA/U1-A and SNRPC/U1-C. Component of the U4/U6-U5 tri-snRNP complex composed of the U4, U6 and U5 snRNAs and at least PRPF3, PRPF4, PRPF6, PRPF8, PRPF31, SNRNP200, TXNL4A, SNRNP40, SNRPB, SNRPD1, SNRPD2, SNRPD3, SNRPE, SNRPF, SNRPG, DDX23, CD2BP2, PPIH, SNU13, EFTUD2, SART1 and USP39, plus LSM2, LSM3, LSM4, LSM5, LSM6, LSM7 and LSM8. Component of the U7 snRNP complex, or U7 Sm protein core complex, that is composed of the U7 snRNA and at least LSM10, LSM11, SNRPB, SNRPD3, SNRPE, SNRPF and SNRPG; the complex does not contain SNRPD1 and SNRPD2. Component of the minor spliceosome, which splices U12-type introns. Part of the SMN-Sm complex that contains SMN1, GEMIN2/SIP1, DDX20/GEMIN3, GEMIN4, GEMIN5, GEMIN6, GEMIN7, GEMIN8, STRAP/UNRIP and the Sm proteins SNRPB, SNRPD1, SNRPD2, SNRPD3, SNRPE, SNRPF and SNRPG; catalyzes core snRNPs assembly. Forms a 6S pICln-Sm complex composed of CLNS1A/pICln, SNRPD1, SNRPD2, SNRPE, SNRPF and SNRPG; ring-like structure where CLNS1A/pICln mimics additional Sm proteins and which is unable to assemble into the core snRNP. Interacts with GEMIN2 (via N-terminus); the interaction is direct. Interacts with SNRPE; the interaction is direct.

Its subcellular location is the cytoplasm. It is found in the cytosol. It localises to the nucleus. Its function is as follows. Plays a role in pre-mRNA splicing as a core component of the spliceosomal U1, U2, U4 and U5 small nuclear ribonucleoproteins (snRNPs), the building blocks of the spliceosome. Component of both the pre-catalytic spliceosome B complex and activated spliceosome C complexes. As a component of the minor spliceosome, involved in the splicing of U12-type introns in pre-mRNAs. As part of the U7 snRNP it is involved in histone 3'-end processing. This chain is Small nuclear ribonucleoprotein G (SNRPG), found in Bos taurus (Bovine).